Here is a 388-residue protein sequence, read N- to C-terminus: Mannitol-1-phosphate 5-dehydrogenase (388 aa).

5–16 lines the NAD(+) pocket; it reads AIQFGGGNIGRG. Lys-213 is a catalytic residue.

Belongs to the mannitol dehydrogenase family. In terms of assembly, monomer.

The catalysed reaction is D-mannitol 1-phosphate + NAD(+) = beta-D-fructose 6-phosphate + NADH + H(+). Its function is as follows. Catalyzes the NAD(H)-dependent interconversion of D-fructose 6-phosphate and D-mannitol 1-phosphate in the mannitol metabolic pathway. The polypeptide is Mannitol-1-phosphate 5-dehydrogenase (mpdA) (Aspergillus fumigatus (strain CBS 144.89 / FGSC A1163 / CEA10) (Neosartorya fumigata)).